Reading from the N-terminus, the 268-residue chain is Tryptophan synthase alpha chain (268 aa).

Residues Glu49 and Asp60 each act as proton acceptor in the active site.

This sequence belongs to the TrpA family. Tetramer of two alpha and two beta chains.

The catalysed reaction is (1S,2R)-1-C-(indol-3-yl)glycerol 3-phosphate + L-serine = D-glyceraldehyde 3-phosphate + L-tryptophan + H2O. The protein operates within amino-acid biosynthesis; L-tryptophan biosynthesis; L-tryptophan from chorismate: step 5/5. Functionally, the alpha subunit is responsible for the aldol cleavage of indoleglycerol phosphate to indole and glyceraldehyde 3-phosphate. The chain is Tryptophan synthase alpha chain from Yersinia pseudotuberculosis serotype O:3 (strain YPIII).